The sequence spans 339 residues: DNA-directed RNA polymerase subunit alpha (339 aa).

Residues 1 to 233 (MVREKVRIST…DLFIPFLHAE (233 aa)) are alpha N-terminal domain (alpha-NTD). The interval 267-339 (IALKSIFIDQ…FTINLPKNKF (73 aa)) is alpha C-terminal domain (alpha-CTD).

It belongs to the RNA polymerase alpha chain family. In plastids the minimal PEP RNA polymerase catalytic core is composed of four subunits: alpha, beta, beta', and beta''. When a (nuclear-encoded) sigma factor is associated with the core the holoenzyme is formed, which can initiate transcription.

Its subcellular location is the plastid. It is found in the chloroplast. The catalysed reaction is RNA(n) + a ribonucleoside 5'-triphosphate = RNA(n+1) + diphosphate. Functionally, DNA-dependent RNA polymerase catalyzes the transcription of DNA into RNA using the four ribonucleoside triphosphates as substrates. The protein is DNA-directed RNA polymerase subunit alpha of Populus trichocarpa (Western balsam poplar).